We begin with the raw amino-acid sequence, 173 residues long: Putative metal-dependent hydrolase BCE33L2441 (173 aa).

Zn(2+) is bound by residues His65, His156, and His160.

This sequence belongs to the metal hydrolase YfiT family. As to quaternary structure, homodimer. The cofactor is Zn(2+).

The protein resides in the cytoplasm. Possible metal-dependent hydrolase. The sequence is that of Putative metal-dependent hydrolase BCE33L2441 from Bacillus cereus (strain ZK / E33L).